Here is a 304-residue protein sequence, read N- to C-terminus: Glycine--tRNA ligase alpha subunit (304 aa).

It belongs to the class-II aminoacyl-tRNA synthetase family. In terms of assembly, tetramer of two alpha and two beta subunits.

Its subcellular location is the cytoplasm. The enzyme catalyses tRNA(Gly) + glycine + ATP = glycyl-tRNA(Gly) + AMP + diphosphate. This Streptococcus agalactiae serotype Ia (strain ATCC 27591 / A909 / CDC SS700) protein is Glycine--tRNA ligase alpha subunit.